Consider the following 255-residue polypeptide: Tabinhibitin 1 (255 aa).

A signal peptide spans 1-23 (MTSILVSRFLIAALVLQYATSDA). The region spanning 67–211 (LSKINDVRDH…KARALLTCNF (145 aa)) is the SCP domain.

Belongs to the CRISP family. As to expression, expressed in salivary glands.

Its subcellular location is the secreted. In terms of biological role, inhibits platelet aggregation induced by all agonists tested. May act by competing with fibrinogen for binding to glycoprotein IIb/IIIa (ITGA2B/ITGB3). The polypeptide is Tabinhibitin 1 (Tabanus yao (Horsefly)).